The primary structure comprises 341 residues: Mitochondrial transcription factor 1 (341 aa).

S-adenosyl-L-methionine is bound by residues Leu-23, Glu-77, Asp-101, and Asn-137.

This sequence belongs to the class I-like SAM-binding methyltransferase superfamily. rRNA adenine N(6)-methyltransferase family.

The protein localises to the mitochondrion. Functionally, mitochondrial transcription factor that confers selective promoter recognition on the core subunit of the yeast mitochondrial RNA polymerase. Interacts with DNA in a non-specific manner. This chain is Mitochondrial transcription factor 1 (MTF1), found in Saccharomyces paradoxus (Yeast).